The following is a 30-amino-acid chain: Cyclotide cter-P (30 aa).

Positions 1 to 30 (GIPCGESCVFIPCITAAIGCSCKSKVCYRN) form a cross-link, cyclopeptide (Gly-Asn). Intrachain disulfides connect Cys-4/Cys-20, Cys-8/Cys-22, and Cys-13/Cys-27.

Post-translationally, this is a cyclic peptide.

The protein resides in the secreted. Probably participates in a plant defense mechanism. The sequence is that of Cyclotide cter-P from Clitoria ternatea (Butterfly pea).